The chain runs to 126 residues: Large ribosomal subunit protein eL14 (126 aa).

It belongs to the eukaryotic ribosomal protein eL14 family.

The protein is Large ribosomal subunit protein eL14 (RPL14) of Tetrahymena thermophila (strain SB210).